The following is a 233-amino-acid chain: Esterase FUS5 (233 aa).

Active-site charge relay system residues include serine 105, aspartate 159, and histidine 187.

This sequence belongs to the LovG family.

Esterase; part of the gene cluster that mediates the biosynthesis of the mycotoxin fusarin C. Within the cluster, FUS1, FUS2, FUS8 and FUS9 are sufficient for fusarin production. The other FUS cluster members are not essential for fusarin C biosynthesis. In Gibberella fujikuroi (strain CBS 195.34 / IMI 58289 / NRRL A-6831) (Bakanae and foot rot disease fungus), this protein is Esterase FUS5.